Consider the following 595-residue polypeptide: Cardiolipin synthase (CMP-forming) / mitochondrial hydrolase fusion protein (595 aa).

A mitochondrion-targeting transit peptide spans 1-24 (MLHTINYRSWHLAARQLGRSTFRK). A run of 2 helical transmembrane segments spans residues 538-560 (ALQL…ASFA) and 564-586 (LFYI…RNTF).

It in the N-terminal section; belongs to the HAD-like hydrolase superfamily. This sequence in the C-terminal section; belongs to the CDP-alcohol phosphatidyltransferase class-I family. The cofactor is Mg(2+). Proteolytically cleaved, presumably during its import into the mitochondrion by mitochondrial processing peptidase.

The protein resides in the mitochondrion. The protein localises to the mitochondrion inner membrane. It catalyses the reaction a CDP-1,2-diacyl-sn-glycerol + a 1,2-diacyl-sn-glycero-3-phospho-(1'-sn-glycerol) = a cardiolipin + CMP + H(+). Its function is as follows. Catalyzes the synthesis of cardiolipin (CL) (diphosphatidylglycerol) by specifically transferring a phosphatidyl group from CDP-diacylglycerol to phosphatidylglycerol (PG). CL is a key phospholipid in mitochondrial membranes and plays important roles in maintaining the functional integrity and dynamics of mitochondria under both optimal and stress conditions. Activity is dispensable for viability. The sequence is that of Cardiolipin synthase (CMP-forming) / mitochondrial hydrolase fusion protein from Schizosaccharomyces pombe (strain 972 / ATCC 24843) (Fission yeast).